We begin with the raw amino-acid sequence, 212 residues long: uncharacterized protein (212 aa).

Residues 1-21 (MRRLTAFGLALLLLASGVARG) form the signal peptide.

To E.coli YfaT and T.maritima TM0986.

This is an uncharacterized protein from Pseudomonas aeruginosa (strain ATCC 15692 / DSM 22644 / CIP 104116 / JCM 14847 / LMG 12228 / 1C / PRS 101 / PAO1).